We begin with the raw amino-acid sequence, 341 residues long: Adenylosuccinate synthetase (341 aa).

Residues 12 to 18 and 42 to 44 contribute to the GTP site; these read GDEGKGK and GHS. D13 serves as the catalytic Proton acceptor. D13 and G42 together coordinate Mg(2+). IMP is bound by residues 13 to 16, 40 to 43, T127, R141, Q179, T194, and R256; these read DEGK and NAGH. The active-site Proton donor is H43. 252-258 serves as a coordination point for substrate; the sequence is VVTGRKR. GTP contacts are provided by residues R258, 284–286, and 324–326; these read CID and STG.

It belongs to the adenylosuccinate synthetase family. Homodimer. The cofactor is Mg(2+).

Its subcellular location is the cytoplasm. It carries out the reaction IMP + L-aspartate + GTP = N(6)-(1,2-dicarboxyethyl)-AMP + GDP + phosphate + 2 H(+). Its pathway is purine metabolism; AMP biosynthesis via de novo pathway; AMP from IMP: step 1/2. In terms of biological role, plays an important role in the de novo pathway of purine nucleotide biosynthesis. Catalyzes the first committed step in the biosynthesis of AMP from IMP. The polypeptide is Adenylosuccinate synthetase (Methanosphaera stadtmanae (strain ATCC 43021 / DSM 3091 / JCM 11832 / MCB-3)).